We begin with the raw amino-acid sequence, 187 residues long: Threonylcarbamoyl-AMP synthase (187 aa).

Residues 4–187 (TPDLDAAVAT…DARTGQILRD (184 aa)) form the YrdC-like domain.

The protein belongs to the SUA5 family. TsaC subfamily.

It is found in the cytoplasm. It carries out the reaction L-threonine + hydrogencarbonate + ATP = L-threonylcarbamoyladenylate + diphosphate + H2O. Its function is as follows. Required for the formation of a threonylcarbamoyl group on adenosine at position 37 (t(6)A37) in tRNAs that read codons beginning with adenine. Catalyzes the conversion of L-threonine, HCO(3)(-)/CO(2) and ATP to give threonylcarbamoyl-AMP (TC-AMP) as the acyladenylate intermediate, with the release of diphosphate. This is Threonylcarbamoyl-AMP synthase from Xanthomonas campestris pv. campestris (strain 8004).